We begin with the raw amino-acid sequence, 547 residues long: MATKKTSLWLYDTTLRDGAQREGISLSLTDKLTIARRLDQLGIPFIEGGWPGANPKDVQFFWQLQEEPLEQAEIVAFCSTRRPHKAVETDKMLQAILSAGTRWVTIFGKSWDLHVLEGLQTSLAENLAMISDTIAYLRSQGRRVIYDAEHWFDGYRANPDYALATLATAQQAGAEWLVMCDTNGGTLPGQISEITTKVRRSLGLDGQSDRQPQLGIHAHNDSGTAVANSLLAVEAGATMVQGTINGYGERCGNANLCTLIPNLQLKLDYDCIEPEKLAHLTSTSRLISEIVNLAPDDHAPFVGRSAFAHKGGIHVSAVQRNPFTYEHIAPNLVGNERRIVVSEQAGLSNVLSKAELFGIALDRQNPACRTILATLKDLEQQGYQFEAAEASFELLMRQAMGDRQPLFLVQGFQVHCDLLTPAENPAYRNALATVKVTVNGQNILEVAEGNGPVSALDQALRKALTRFYPQIADFHLTDYKVRILDGGAGTSAKTRVLVESSNGDRRWTTVGVSGNILEASYQAVVEGIEYGLRLLTCGLTNQEAISS.

The 271-residue stretch at 8–278 (LWLYDTTLRD…YDCIEPEKLA (271 aa)) folds into the Pyruvate carboxyltransferase domain.

The protein belongs to the alpha-IPM synthase/homocitrate synthase family.

It catalyses the reaction pyruvate + acetyl-CoA + H2O = (3R)-citramalate + CoA + H(+). Its pathway is amino-acid biosynthesis; L-isoleucine biosynthesis; 2-oxobutanoate from pyruvate: step 1/3. Functionally, catalyzes the condensation of pyruvate and acetyl-coenzyme A to form (R)-citramalate. This Synechocystis sp. (strain ATCC 27184 / PCC 6803 / Kazusa) protein is (R)-citramalate synthase.